Here is a 161-residue protein sequence, read N- to C-terminus: Cytochrome c-type biogenesis protein CcmE (161 aa).

The Cytoplasmic portion of the chain corresponds to 1 to 13 (MSWLPKSPKARRR). The chain crosses the membrane as a helical; Signal-anchor for type II membrane protein span at residues 14–34 (LMLVAAIAPVLAVAAGLTLWG). Over 35–161 (LSDSISFFYT…QRPEHQGDAL (127 aa)) the chain is Periplasmic. Residues His-128 and Tyr-132 each contribute to the heme site.

This sequence belongs to the CcmE/CycJ family.

It localises to the cell inner membrane. Heme chaperone required for the biogenesis of c-type cytochromes. Transiently binds heme delivered by CcmC and transfers the heme to apo-cytochromes in a process facilitated by CcmF and CcmH. The protein is Cytochrome c-type biogenesis protein CcmE of Phenylobacterium zucineum (strain HLK1).